Here is a 416-residue protein sequence, read N- to C-terminus: Enolase (416 aa).

Q160 is a (2R)-2-phosphoglycerate binding site. Residue E204 is the Proton donor of the active site. Residues D239, E280, and D306 each contribute to the Mg(2+) site. 4 residues coordinate (2R)-2-phosphoglycerate: K331, R360, S361, and K382. K331 acts as the Proton acceptor in catalysis.

The protein belongs to the enolase family. The cofactor is Mg(2+).

It is found in the cytoplasm. It localises to the secreted. The protein resides in the cell surface. It catalyses the reaction (2R)-2-phosphoglycerate = phosphoenolpyruvate + H2O. Its pathway is carbohydrate degradation; glycolysis; pyruvate from D-glyceraldehyde 3-phosphate: step 4/5. Functionally, catalyzes the reversible conversion of 2-phosphoglycerate (2-PG) into phosphoenolpyruvate (PEP). It is essential for the degradation of carbohydrates via glycolysis. This Sulfolobus acidocaldarius (strain ATCC 33909 / DSM 639 / JCM 8929 / NBRC 15157 / NCIMB 11770) protein is Enolase.